Here is a 189-residue protein sequence, read N- to C-terminus: Adenylate kinase homolog MTH_1663 (189 aa).

12–20 (GVPGTGKTT) lines the ATP pocket.

Belongs to the archaeal adenylate kinase family.

The sequence is that of Adenylate kinase homolog MTH_1663 from Methanothermobacter thermautotrophicus (strain ATCC 29096 / DSM 1053 / JCM 10044 / NBRC 100330 / Delta H) (Methanobacterium thermoautotrophicum).